The primary structure comprises 1300 residues: Insulin receptor-related protein (1300 aa).

The signal sequence occupies residues 1–26 (MAVPALWPWGVHLLMSLLSLGSGLDT). Residues Asn-47 and Asn-100 are each glycosylated (N-linked (GlcNAc...) asparagine). 9 cysteine pairs are disulfide-bonded: Cys-214-Cys-222, Cys-216-Cys-228, Cys-229-Cys-237, Cys-233-Cys-246, Cys-249-Cys-258, Cys-262-Cys-274, Cys-280-Cys-300, Cys-304-Cys-317, and Cys-320-Cys-324. A glycan (N-linked (GlcNAc...) asparagine) is linked at Asn-311. N-linked (GlcNAc...) asparagine glycans are attached at residues Asn-411, Asn-492, Asn-528, Asn-616, Asn-634, Asn-756, Asn-885, and Asn-898. 2 Fibronectin type-III domains span residues 483-603 (QTRT…TLPA) and 607-707 (VPQD…AQEV). A disulfide bridge connects residues Cys-657 and Cys-864. Residues 747–921 (EAGLLRLGKN…LEEEDTGGMR (175 aa)) lie on the Extracellular side of the membrane. The Fibronectin type-III 3 domain maps to 818–913 (IPGKVAWKAA…GVTFYITDLE (96 aa)). Residues 922 to 943 (IFLTVTPVGFMLLVTLAALGFF) traverse the membrane as a helical segment. Topologically, residues 944–1300 (YSRKRNSTLY…YSAPNGGPGH (357 aa)) are cytoplasmic. Residues 979-1254 (IAIIRELGQG…RIQDELRPSF (276 aa)) form the Protein kinase domain. ATP contacts are provided by residues 985 to 993 (LGQGSFGMV) and Lys-1013. The Proton acceptor role is filled by Asp-1115. Phosphotyrosine; by autocatalysis occurs at positions 1145 and 1146. Residues 1273 to 1300 (LPTEAEPDSPPTLNGASDYSAPNGGPGH) are disordered.

This sequence belongs to the protein kinase superfamily. Tyr protein kinase family. Insulin receptor subfamily. In terms of assembly, probable tetramer of 2 alpha and 2 beta chains linked by disulfide bonds. The alpha chains contribute to the formation of the ligand-binding domain, while the beta chains carry the kinase domain. Post-translationally, autophosphorylated on tyrosine residues between pH 7.9 and pH 10.5. In terms of tissue distribution, highly expressed in the islets as well as in pancreatic beta-cells.

It is found in the membrane. It catalyses the reaction L-tyrosyl-[protein] + ATP = O-phospho-L-tyrosyl-[protein] + ADP + H(+). Functionally, receptor with tyrosine-protein kinase activity. Functions as a pH sensing receptor which is activated by increased extracellular pH. Activates an intracellular signaling pathway that involves IRS1 and AKT1/PKB. The chain is Insulin receptor-related protein (Insrr) from Mus musculus (Mouse).